The chain runs to 927 residues: Nuclear factor of activated T-cells, cytoplasmic 2 (927 aa).

The interval 1-29 (MDVPEPQPDPDGGDGPGHEPGGSPQDELD) is disordered. S23, S53, S54, S56, S99, S107, and S110 each carry phosphoserine. Positions 111 to 116 (PRIEIT) are calcineurin-binding. A transactivation domain A (TAD-A) region spans residues 119–201 (HELMQAGGAL…CVSPNNAGPD (83 aa)). Phosphoserine occurs at positions 136, 150, 170, 173, 174, 176, 177, 179, and 182. Positions 163-177 (YREPLCLSPASSGSS) are required for cytoplasmic retention of the phosphorylated form. Tandem repeats lie at residues 186–202 (SPYT…GPDD) and 215–231 (SPRT…LAED). The interval 186-292 (SPYTSPCVSP…PHVALQDDSI (107 aa)) is 3 X approximate SP repeats. Disordered regions lie at residues 203-299 (LCPQ…YPPT) and 322-341 (SKIW…PSKA). A phosphoserine mark is found at S215, S219, S223, S238, and S245. The span at 216–226 (PRTSPIMSPRT) shows a compositional bias: polar residues. A Nuclear localization signal motif is present at residues 253 to 255 (KRR). Phosphoserine occurs at positions 257, 270, 276, 278, 282, 328, and 365. The segment covering 267–277 (PAASPQRSRSP) has biased composition (low complexity). One copy of the 3; approximate repeat lies at 274–290 (SRSPSPQPSPHVALQDD). An RHD domain is found at 394 to 576 (ASLPPLEWPL…NPIECSQRSA (183 aa)). The DNA-binding element occupies 423-430 (RAHYETEG). Phosphoserine occurs at positions 757, 759, and 761. Disordered regions lie at residues 790-812 (AGSQ…QQAS) and 841-903 (FGPS…QNLD). A compositionally biased stretch (polar residues) spans 798–812 (GSTLPHTSSASQQAS). At S860 the chain carries Phosphoserine.

As to quaternary structure, member of the multicomponent NFATC transcription complex that consists of at least two components, a pre-existing cytoplasmic component NFATC2 and an inducible nuclear component NFATC1. Other members such as NFATC4, NFATC3 or members of the activating protein-1 family, MAF, GATA4 and Cbp/p300 can also bind the complex. The phosphorylated form specifically interacts with XPO1; which mediates nuclear export. NFATC proteins bind to DNA as monomers. Interacts with NFATC2IP. Interacts with FOXP3. Interacts with TBX21 ('Thr-302' phosphorylated form). Interacts with KAT2A. Interacts with HOMER2 and HOMER3; this interaction competes with calcineurin/PPP3CA-binding and hence prevents NFATC2 dephosphorylation and activation. Interacts with protein phosphatase PPP3CA/calcineurin A. Interacts with AKAP5 (via leucine zipper domain); this is required for NFATC2/NFAT1 recruitment to CRAC channels. In terms of processing, in resting cells, phosphorylated by NFATC-kinase on at least 18 sites in the 99-365 region. Upon cell stimulation, all these sites except Ser-245 are dephosphorylated by calcineurin. Dephosphorylation induces a conformational change that simultaneously exposes an NLS and masks an NES, which results in nuclear localization. Simultaneously, one site among Ser-53; Ser-54 and Ser-56 is phosphorylated; which is required for full transcriptional activity. Post-translationally, ubiquitinated in endothelial cells by RNF213 downstream of the non-canonical Wnt signaling pathway, leading to its degradation by the proteasome. Expressed in spleen, heart, testis, brain, placenta, muscle and pancreas. Expressed in the thymus. Expressed in the lung. Expressed in cartilage.

It is found in the cytoplasm. Its subcellular location is the nucleus. Plays a role in the inducible expression of cytokine genes in T cells, especially in the induction of the IL-2, IL-3, IL-4, TNF-alpha or GM-CSF. Promotes invasive migration through the activation of GPC6 expression and WNT5A signaling pathway. Is involved in the negative regulation of chondrogenesis. Recruited by AKAP5 to ORAI1 pore-forming subunit of CRAC channels in Ca(2+) signaling microdomains where store-operated Ca(2+) influx is coupled to calmodulin and calcineurin signaling and activation of NFAT-dependent transcriptional responses. This chain is Nuclear factor of activated T-cells, cytoplasmic 2 (Nfatc2), found in Mus musculus (Mouse).